The following is a 149-amino-acid chain: D-aminoacyl-tRNA deacylase (149 aa).

A Gly-cisPro motif, important for rejection of L-amino acids motif is present at residues 137-138 (GP).

This sequence belongs to the DTD family. In terms of assembly, homodimer.

The protein resides in the cytoplasm. It catalyses the reaction glycyl-tRNA(Ala) + H2O = tRNA(Ala) + glycine + H(+). The enzyme catalyses a D-aminoacyl-tRNA + H2O = a tRNA + a D-alpha-amino acid + H(+). An aminoacyl-tRNA editing enzyme that deacylates mischarged D-aminoacyl-tRNAs. Also deacylates mischarged glycyl-tRNA(Ala), protecting cells against glycine mischarging by AlaRS. Acts via tRNA-based rather than protein-based catalysis; rejects L-amino acids rather than detecting D-amino acids in the active site. By recycling D-aminoacyl-tRNA to D-amino acids and free tRNA molecules, this enzyme counteracts the toxicity associated with the formation of D-aminoacyl-tRNA entities in vivo and helps enforce protein L-homochirality. The polypeptide is D-aminoacyl-tRNA deacylase (Desulfitobacterium hafniense (strain DSM 10664 / DCB-2)).